The primary structure comprises 361 residues: Phosphoserine aminotransferase (361 aa).

An L-glutamate-binding site is contributed by arginine 42. Pyridoxal 5'-phosphate is bound by residues 76–77, tryptophan 102, threonine 153, aspartate 173, and glutamine 196; that span reads AR. Lysine 197 is modified (N6-(pyridoxal phosphate)lysine). 238-239 is a binding site for pyridoxal 5'-phosphate; that stretch reads NT.

It belongs to the class-V pyridoxal-phosphate-dependent aminotransferase family. SerC subfamily. In terms of assembly, homodimer. The cofactor is pyridoxal 5'-phosphate.

It is found in the cytoplasm. The enzyme catalyses O-phospho-L-serine + 2-oxoglutarate = 3-phosphooxypyruvate + L-glutamate. It catalyses the reaction 4-(phosphooxy)-L-threonine + 2-oxoglutarate = (R)-3-hydroxy-2-oxo-4-phosphooxybutanoate + L-glutamate. It participates in amino-acid biosynthesis; L-serine biosynthesis; L-serine from 3-phospho-D-glycerate: step 2/3. The protein operates within cofactor biosynthesis; pyridoxine 5'-phosphate biosynthesis; pyridoxine 5'-phosphate from D-erythrose 4-phosphate: step 3/5. Its function is as follows. Catalyzes the reversible conversion of 3-phosphohydroxypyruvate to phosphoserine and of 3-hydroxy-2-oxo-4-phosphonooxybutanoate to phosphohydroxythreonine. The chain is Phosphoserine aminotransferase from Yersinia pestis bv. Antiqua (strain Angola).